The primary structure comprises 260 residues: Proteasome subunit alpha type-1 (260 aa).

The segment at 240 to 260 (PRTTGGAAAAAAPGGAEPMQM) is disordered. Residues 244–260 (GGAAAAAAPGGAEPMQM) are compositionally biased toward low complexity.

The protein belongs to the peptidase T1A family. The 26S proteasome consists of a 20S proteasome core and two 19S regulatory subunits. The 20S proteasome core is composed of 28 subunits that are arranged in four stacked rings, resulting in a barrel-shaped structure. The two end rings are each formed by seven alpha subunits, and the two central rings are each formed by seven beta subunits. The catalytic chamber with the active sites is on the inside of the barrel.

It is found in the cytoplasm. The protein resides in the nucleus. The proteasome is a multicatalytic proteinase complex which is characterized by its ability to cleave peptides with Arg, Phe, Tyr, Leu, and Glu adjacent to the leaving group at neutral or slightly basic pH. The proteasome has an ATP-dependent proteolytic activity. This chain is Proteasome subunit alpha type-1 (pas-6), found in Caenorhabditis elegans.